The sequence spans 191 residues: Protein NUCLEAR FUSION DEFECTIVE 2 (191 aa).

Residues 1-29 form the signal peptide; it reads MATLRFTLLLLVFVVGIFFSFSSVSHVRA. An RNase III domain is found at 48 to 167; the sequence is LAKLQTQIGY…IFGAIAIDAG (120 aa).

Required for karyogamy during female gametophyte development, when the two polar nuclei fuse to form the diploid central cell nucleus. This is Protein NUCLEAR FUSION DEFECTIVE 2 from Arabidopsis thaliana (Mouse-ear cress).